Consider the following 293-residue polypeptide: Ribosomal protein L11 methyltransferase (293 aa).

The S-adenosyl-L-methionine site is built by Thr145, Gly166, Asp188, and Asn230.

This sequence belongs to the methyltransferase superfamily. PrmA family.

It is found in the cytoplasm. It carries out the reaction L-lysyl-[protein] + 3 S-adenosyl-L-methionine = N(6),N(6),N(6)-trimethyl-L-lysyl-[protein] + 3 S-adenosyl-L-homocysteine + 3 H(+). Its function is as follows. Methylates ribosomal protein L11. The polypeptide is Ribosomal protein L11 methyltransferase (Sodalis glossinidius (strain morsitans)).